A 628-amino-acid chain; its full sequence is Set1/Ash2 histone methyltransferase complex subunit ASH2 (628 aa).

An N-acetylmethionine modification is found at Met-1. A compositionally biased stretch (gly residues) spans 1 to 18 (MAAAGAGPGQEAGAGPGP). The PHD-type; atypical zinc finger occupies 1 to 66 (MAAAGAGPGQ…SGEAEGGEAN (66 aa)). The interval 1-107 (MAAAGAGPGQ…QAGSVDEENG (107 aa)) is disordered. The span at 36-65 (AAGAAAPPGEGISAAPTVEPSSGEAEGGEA) shows a compositional bias: low complexity. A DNA-binding region spans residues 67-177 (LVDVSGGLET…MCLSALANLT (111 aa)). Ser-101 is modified (phosphoserine). The segment at 117–150 (CGICTKWFTADTFGIDTSSCLPFMTNYSFHCNVC) adopts a C4-type zinc-finger fold. Residues 235-252 (LVKEHPDPGSKDPEEDYP) are compositionally biased toward basic and acidic residues. The segment at 235 to 331 (LVKEHPDPGS…AQRLPPHGYP (97 aa)) is disordered. Over residues 270-282 (NQKQSSAVSTSGN) the composition is skewed to polar residues. Gly residues predominate over residues 283 to 295 (LNGGIAAGSSGKG). Position 296 is an asymmetric dimethylarginine; by PRMT1 and PRMT5 (Arg-296). Residue Ser-316 is modified to Phosphoserine. The tract at residues 316–628 (SDPLFSAQRL…DGRRSPPWEP (313 aa)) is interaction with RBBP5. Residues 360-583 (LDCWAGKPIP…VSINFGPCFK (224 aa)) form the B30.2/SPRY domain.

In terms of assembly, interacts with HCFC1. Core component of several methyltransferase-containing complexes including MLL1/MLL, MLL2/3 (also named ASCOM complex) and MLL4/WBP7. Each complex is at least composed of ASH2L, RBBP5, WDR5, DPY30, one or more specific histone methyltransferases (KMT2A/MLL1, KMT2D/MLL2, KMT2C/MLL3 and KMT2B/MLL4), and the facultative components PAGR1, BACC1, CHD8, E2F6, HCFC1, HCFC2, HSP70, INO80C, KDM6A, KANSL1, LAS1L, MAX, MCRS1, MEN1, MGA, KAT8/MOF, NCOA6, PAXIP1/PTIP, PELP1, PHF20, PRP31, RING2, RUVB1/TIP49A, RUVB2/TIP49B, SENP3, TAF1, TAF4, TAF6, TAF7, TAF9, TEX10 and alpha- and beta-tubulin. Component of the SET1 complex, at least composed of the catalytic subunit (SETD1A or SETD1B), WDR5, WDR82, RBBP5, ASH2L/ASH2, CXXC1/CFP1, HCFC1 and DPY30. Found in a complex with RBBP5, ASH2L, DPY30, KMT2A, KMT2D and WDR5. Component of a histone methylation complex composed of at least ZNF335, RBBP5, ASH2L and WDR5; the complex may have histone H3-specific methyltransferase activity, however does not have specificity for 'Lys-4' of histone H3. Within the complex, interacts with ZNF335. Interacts with RBBP5. Components of this complex may associate with components of a nuclear receptor-mediated transcription complex to form a complex at least composed of ZNF335, HCFC1, CCAR2, EMSY, MKI67, RBBP5, ASH2L and WDR5. Within this complex also interacts with CCAR2 and EMSY. Interacts with DPY30. Interacts with SETD1A and SETD1B. Both monomethylated and dimethylated on arginine residues in the C-terminus. Arg-296 is the major site. Methylation is not required for nuclear localization, nor for MLL complex integrity or maintenance of global histone H3K4me3 levels. In terms of tissue distribution, ubiquitously expressed. Predominantly expressed in adult heart and testis and fetal lung and liver, with barely detectable expression in adult lung, liver, kidney, prostate, and peripheral leukocytes.

The protein resides in the nucleus. In terms of biological role, transcriptional regulator. Component or associated component of some histone methyltransferase complexes which regulates transcription through recruitment of those complexes to gene promoters. Component of the Set1/Ash2 histone methyltransferase (HMT) complex, a complex that specifically methylates 'Lys-4' of histone H3, but not if the neighboring 'Lys-9' residue is already methylated. As part of the MLL1/MLL complex it is involved in methylation and dimethylation at 'Lys-4' of histone H3. May play a role in hematopoiesis. In association with RBBP5 and WDR5, stimulates the histone methyltransferase activities of KMT2A, KMT2B, KMT2C, KMT2D, SETD1A and SETD1B. The polypeptide is Set1/Ash2 histone methyltransferase complex subunit ASH2 (ASH2L) (Homo sapiens (Human)).